The primary structure comprises 405 residues: Ubiquitin-like modifier-activating enzyme 5 (405 aa).

Positions 1–44 are disordered; it reads MATVEELQTRVKQLEEELERERTRNRGGTDGGGGRKKIDQMSSE. The segment covering 7-24 has biased composition (basic and acidic residues); the sequence is LQTRVKQLEEELERERTR. Positions 81, 102, 125, 148, and 182 each coordinate ATP. Positions 224 and 227 each coordinate Zn(2+). The active-site Glycyl thioester intermediate is the C248. Zn(2+)-binding residues include C301 and C306. Residues 346–377 are linker; that stretch reads AETTEEELKAASHGHVPELVEGVHVAYVRPMT. Positions 390–405 match the UFC1-binding sequence (UFC) motif; it reads DDQESLEDLMAKMKSI.

It belongs to the ubiquitin-activating E1 family. UBA5 subfamily. Homodimer; homodimerization is required for UFM1 activation. Interacts (via UIS motif) with UFM1; binds UFM1 via a trans-binding mechanism in which UFM1 interacts with distinct sites in both subunits of the UBA5 homodimer. Interacts (via C-terminus) with UFC1.

It localises to the cytoplasm. Its subcellular location is the nucleus. The protein localises to the endoplasmic reticulum membrane. The protein resides in the golgi apparatus. In terms of biological role, E1-like enzyme which specifically catalyzes the first step in ufmylation. Activates UFM1 by first adenylating its C-terminal glycine residue with ATP, and thereafter linking this residue to the side chain of a cysteine residue in E1, yielding a UFM1-E1 thioester and free AMP. Activates UFM1 via a trans-binding mechanism, in which UFM1 interacts with distinct sites in both subunits of the UBA5 homodimer. Trans-binding also promotes stabilization of the UBA5 homodimer, and enhances ATP-binding. Transfer of UFM1 from UBA5 to the E2-like enzyme UFC1 also takes place using a trans mechanism. This is Ubiquitin-like modifier-activating enzyme 5 from Branchiostoma floridae (Florida lancelet).